A 1588-amino-acid polypeptide reads, in one-letter code: RB1-inducible coiled-coil protein 1 (1588 aa).

Phosphoserine is present on residues serine 222, serine 229, and serine 237. A Phosphothreonine modification is found at threonine 238. Phosphoserine occurs at positions 243, 253, 257, and 261. Residues 565 to 568 (KPRK) carry the Nuclear localization signal motif. Phosphoserine occurs at positions 623, 646, 649, 652, 733, 1087, 1366, and 1478. The interval 638-674 (QKVSTSQASPQSAASPRIESTTGITTTTSPKTPPPLT) is disordered. Residues 643-667 (SQASPQSAASPRIESTTGITTTTSP) are compositionally biased toward low complexity. The short motif at 730–736 (DFMSAVN) is the FFAT element. Coiled coils occupy residues 858–1393 (LKEK…TSSF) and 1440–1479 (SVQE…SQSL).

Part of a complex containing ATG13/KIAA0652, ULK1 and RB1CC1. This complex associates with ATG101. Interacts with PTK2/FAK1 and PTK2B/PYK2. Interacts with GABARAP and GABARAPL1. Interacts with ATG16L1; the interaction is required for ULK1 complex-dependent autophagy. Interacts with RNF111, SKI and SMAD7. Interacts with COP1 in the cytoplasm of proliferating cells in response to UV stimulation. Interacts with TP53. Interacts with C9orf72. Interacts with WDR45B. Interacts with ATG13; this interaction is increased in the absence of TMEM39A. Interacts with WIPI2. Interacts with TAX1BP1. Interacts (via phosphorylated FFAT motif) with MOSPD2. In terms of processing, phosphorylation at Ser-733 of the FFAT motif activates interaction with MOSPD2. Expressed abundantly in heart and testis, and moderately in kidney, liver and skeletal muscles. Very low expression levels in lung and spleen. Colocalizes with RB1 in various tissues.

The protein resides in the nucleus. It localises to the cytoplasm. It is found in the cytosol. The protein localises to the preautophagosomal structure. Its subcellular location is the lysosome. Involved in autophagy. Regulates early events but also late events of autophagosome formation through direct interaction with Atg16L1. Required for the formation of the autophagosome-like double-membrane structure that surrounds the Salmonella-containing vacuole (SCV) during S.typhimurium infection and subsequent xenophagy. Involved in repair of DNA damage caused by ionizing radiation, which subsequently improves cell survival by decreasing apoptosis. Inhibits PTK2/FAK1 and PTK2B/PYK2 kinase activity, affecting their downstream signaling pathways. Plays a role as a modulator of TGF-beta-signaling by restricting substrate specificity of RNF111. Functions as a DNA-binding transcription factor. Is a potent regulator of the RB1 pathway through induction of RB1 expression. Plays a crucial role in muscular differentiation. Plays an indispensable role in fetal hematopoiesis and in the regulation of neuronal homeostasis. The chain is RB1-inducible coiled-coil protein 1 from Mus musculus (Mouse).